Consider the following 128-residue polypeptide: uncharacterized protein (128 aa).

A run of 3 helical transmembrane segments spans residues 1–21 (MLVF…LIFL), 51–71 (VRVE…AILG), and 76–96 (ANFL…VYYV).

It is found in the membrane. This is an uncharacterized protein from Saccharomyces cerevisiae (strain ATCC 204508 / S288c) (Baker's yeast).